Here is a 584-residue protein sequence, read N- to C-terminus: A-type ATP synthase subunit A (584 aa).

233–240 (GPFGSGKT) contributes to the ATP binding site.

It belongs to the ATPase alpha/beta chains family. As to quaternary structure, has multiple subunits with at least A(3), B(3), C, D, E, F, H, I and proteolipid K(x).

The protein resides in the cell membrane. The catalysed reaction is ATP + H2O + 4 H(+)(in) = ADP + phosphate + 5 H(+)(out). Its function is as follows. Component of the A-type ATP synthase that produces ATP from ADP in the presence of a proton gradient across the membrane. The A chain is the catalytic subunit. The sequence is that of A-type ATP synthase subunit A from Methanobrevibacter smithii (strain ATCC 35061 / DSM 861 / OCM 144 / PS).